Reading from the N-terminus, the 187-residue chain is Pseudo histidine-containing phosphotransfer protein 1 (187 aa).

The region spanning 74–169 is the HPt domain; sequence SPNFVEEVVT…AVLRQKLESY (96 aa).

Functions as a two-component phosphorelay mediator between cytokinin sensor histidine kinases and response regulators (B-type ARRs). Plays an important role in propagating cytokinin signal transduction. The chain is Pseudo histidine-containing phosphotransfer protein 1 from Oryza sativa subsp. japonica (Rice).